The sequence spans 509 residues: Cobyric acid synthase (509 aa).

The GATase cobBQ-type domain maps to 262–459 (EIKVGIIKLP…IHGIFENDSW (198 aa)). The active-site Nucleophile is cysteine 343. The active site involves histidine 451.

This sequence belongs to the CobB/CobQ family. CobQ subfamily.

Its pathway is cofactor biosynthesis; adenosylcobalamin biosynthesis. In terms of biological role, catalyzes amidations at positions B, D, E, and G on adenosylcobyrinic A,C-diamide. NH(2) groups are provided by glutamine, and one molecule of ATP is hydrogenolyzed for each amidation. This chain is Cobyric acid synthase, found in Prochlorococcus marinus (strain MIT 9215).